A 396-amino-acid polypeptide reads, in one-letter code: MANKKKPSIKKSVNEPNPHLKQSHASGSQQSLGDSLIEYNQPESSIPVCYIQNYPQFSDSYLYEPPFILSKVNEEVGHTVVHFLCTGNYETLRTASEPGASKIGIEFRRSMLVYQAAKEYDLYDLETYAKKYIEVFGESMSIFDIMEAAREIYSKLPKDEIWLTGYIYKQLEIAFSLDRNIFQRVDFYDGVGKDPNFDKDVMRMVVNIYSEVLSRQLDETTPEGSIAEDGAAEDCAAEDGAVEDGVVEEGAVEEGAVEEGAVEDGAVKDGAVEDGAVENGVAEECGAAEDVADDGALKEAVNLGIPSQPSGTALSFEWDHWTSGSKMGASFSGNSQWKYEKDTNSLYPENKAEESGGFNAAYEGIKSKKKKDKKKKKSNKDKKVEELAEPVPECGR.

2 disordered regions span residues 1-32 and 347-396; these read MANK…QQSL and YPEN…ECGR. Positions 23–32 are enriched in polar residues; the sequence is SHASGSQQSL. Residues 367-380 show a composition bias toward basic residues; that stretch reads SKKKKDKKKKKSNK.

In terms of biological role, part of the subtelomeric hrmA-associated cluster (HAC) containing genes that alter the hyphal surface (such as reduced total chitin or increased beta-glucan exposure) and perturb inter-hyphal interactions within the developing biofilms, resulting in a loss of vertically aligned polarized growing filaments. Consequently, this hypoxia-typic morphotype (called H-MORPH) with altered biofilm architecture leads to increased hypoxia fitness, increased host inflammation, rapid disease progression, and mortality in a murine model of invasive aspergillosis. The polypeptide is Subtelomeric hrmA-associated cluster protein AFUB_079040 (Aspergillus fumigatus (strain CBS 144.89 / FGSC A1163 / CEA10) (Neosartorya fumigata)).